The chain runs to 122 residues: Large ribosomal subunit protein uL18 (122 aa).

It belongs to the universal ribosomal protein uL18 family. In terms of assembly, part of the 50S ribosomal subunit; part of the 5S rRNA/L5/L18/L25 subcomplex. Contacts the 5S and 23S rRNAs.

This is one of the proteins that bind and probably mediate the attachment of the 5S RNA into the large ribosomal subunit, where it forms part of the central protuberance. The sequence is that of Large ribosomal subunit protein uL18 from Kosmotoga olearia (strain ATCC BAA-1733 / DSM 21960 / TBF 19.5.1).